We begin with the raw amino-acid sequence, 306 residues long: Phosphatidate cytidylyltransferase (306 aa).

Residues 1-28 form a disordered region; it reads MTTNDAGTGNPAEQPARGAKQQPATETS. Helical transmembrane passes span 36–56, 82–102, 103–123, 151–171, 180–200, 218–238, 241–261, and 285–305; these read AAIV…VFVP, GYLI…WLTW, PFGA…CMIW, ATVF…MLVY, FCMM…GVLF, FAGS…FLVG, PWIG…GDLV, and MDRL…LTLL.

This sequence belongs to the CDS family.

It localises to the cell membrane. It carries out the reaction a 1,2-diacyl-sn-glycero-3-phosphate + CTP + H(+) = a CDP-1,2-diacyl-sn-glycerol + diphosphate. It participates in phospholipid metabolism; CDP-diacylglycerol biosynthesis; CDP-diacylglycerol from sn-glycerol 3-phosphate: step 3/3. The sequence is that of Phosphatidate cytidylyltransferase (cdsA) from Mycobacterium bovis (strain ATCC BAA-935 / AF2122/97).